A 168-amino-acid chain; its full sequence is CASP-like protein 4D1 (168 aa).

Over 1–11 the chain is Cytoplasmic; that stretch reads MAPPPPSLASR. A helical membrane pass occupies residues 12-32; it reads MAALILRILTFIFLIASLVIL. Over 33 to 57 the chain is Extracellular; the sequence is TTNTATLELDLVEVKVHFKDVYAYR. The helical transmembrane segment at 58-78 threads the bilayer; it reads YMLATIVIGLAYTVLQIAFTL. Residues 79–97 are Cytoplasmic-facing; it reads YYVATGNRMMSGDGNLAFD. The chain crosses the membrane as a helical span at residues 98 to 118; sequence FFGDKVISYILVTGAAAGFAS. Residues 119–144 are Extracellular-facing; the sequence is TKDIKPVFSGSGDFDAFINKGYASAS. Residues 145–165 traverse the membrane as a helical segment; sequence LLLIGFVCTAVLSVFSSYALP. At 166-168 the chain is on the cytoplasmic side; that stretch reads KQV.

This sequence belongs to the Casparian strip membrane proteins (CASP) family. Homodimer and heterodimers.

It localises to the cell membrane. In Ricinus communis (Castor bean), this protein is CASP-like protein 4D1.